The following is a 434-amino-acid chain: Nicotinate phosphoribosyltransferase (434 aa).

His-242 is modified (phosphohistidine; by autocatalysis).

Belongs to the NAPRTase family. Transiently phosphorylated on a His residue during the reaction cycle. Phosphorylation strongly increases the affinity for substrates and increases the rate of nicotinate D-ribonucleotide production. Dephosphorylation regenerates the low-affinity form of the enzyme, leading to product release.

The catalysed reaction is nicotinate + 5-phospho-alpha-D-ribose 1-diphosphate + ATP + H2O = nicotinate beta-D-ribonucleotide + ADP + phosphate + diphosphate. The protein operates within cofactor biosynthesis; NAD(+) biosynthesis; nicotinate D-ribonucleotide from nicotinate: step 1/1. Catalyzes the synthesis of beta-nicotinate D-ribonucleotide from nicotinate and 5-phospho-D-ribose 1-phosphate at the expense of ATP. The sequence is that of Nicotinate phosphoribosyltransferase from Bradyrhizobium sp. (strain BTAi1 / ATCC BAA-1182).